Reading from the N-terminus, the 265-residue chain is Hydroxyethylthiazole kinase (265 aa).

Methionine 43 is a substrate binding site. Residues lysine 118 and threonine 165 each contribute to the ATP site. Glycine 192 serves as a coordination point for substrate.

The protein belongs to the Thz kinase family. Mg(2+) is required as a cofactor.

The enzyme catalyses 5-(2-hydroxyethyl)-4-methylthiazole + ATP = 4-methyl-5-(2-phosphooxyethyl)-thiazole + ADP + H(+). It participates in cofactor biosynthesis; thiamine diphosphate biosynthesis; 4-methyl-5-(2-phosphoethyl)-thiazole from 5-(2-hydroxyethyl)-4-methylthiazole: step 1/1. Its function is as follows. Catalyzes the phosphorylation of the hydroxyl group of 4-methyl-5-beta-hydroxyethylthiazole (THZ). The sequence is that of Hydroxyethylthiazole kinase from Pyrococcus abyssi (strain GE5 / Orsay).